Consider the following 492-residue polypeptide: 2-succinylbenzoate--CoA ligase (492 aa).

Belongs to the ATP-dependent AMP-binding enzyme family. MenE subfamily.

It catalyses the reaction 2-succinylbenzoate + ATP + CoA = 2-succinylbenzoyl-CoA + AMP + diphosphate. Its pathway is quinol/quinone metabolism; 1,4-dihydroxy-2-naphthoate biosynthesis; 1,4-dihydroxy-2-naphthoate from chorismate: step 5/7. It participates in quinol/quinone metabolism; menaquinone biosynthesis. Its function is as follows. Converts 2-succinylbenzoate (OSB) to 2-succinylbenzoyl-CoA (OSB-CoA). This chain is 2-succinylbenzoate--CoA ligase, found in Staphylococcus aureus (strain bovine RF122 / ET3-1).